The chain runs to 195 residues: Molybdenum cofactor guanylyltransferase (195 aa).

Residues 10 to 12 (LAG), K23, N51, D69, and D99 contribute to the GTP site. Residue D99 participates in Mg(2+) binding.

The protein belongs to the MobA family. In terms of assembly, monomer. The cofactor is Mg(2+).

The protein resides in the cytoplasm. It carries out the reaction Mo-molybdopterin + GTP + H(+) = Mo-molybdopterin guanine dinucleotide + diphosphate. Its function is as follows. Transfers a GMP moiety from GTP to Mo-molybdopterin (Mo-MPT) cofactor (Moco or molybdenum cofactor) to form Mo-molybdopterin guanine dinucleotide (Mo-MGD) cofactor. The protein is Molybdenum cofactor guanylyltransferase of Shewanella putrefaciens (strain CN-32 / ATCC BAA-453).